The chain runs to 217 residues: Somatotropin (217 aa).

Positions 1–26 (MAPGSWFSPLFIAVITLGLQWPKEAA) are cleaved as a signal peptide. Histidine 46 provides a ligand contact to Zn(2+). Residues cysteine 79 and cysteine 190 are joined by a disulfide bond. Residue glutamate 199 participates in Zn(2+) binding. Cysteine 207 and cysteine 215 form a disulfide bridge.

Belongs to the somatotropin/prolactin family.

The protein localises to the secreted. Functionally, growth hormone plays an important role in growth control. The protein is Somatotropin (GH) of Struthio camelus (Common ostrich).